The sequence spans 286 residues: Shikimate dehydrogenase (NADP(+)) (286 aa).

Shikimate-binding positions include 22 to 24 (SRS) and threonine 71. The active-site Proton acceptor is lysine 75. Glutamate 87 is a binding site for NADP(+). 2 residues coordinate shikimate: asparagine 96 and aspartate 111. NADP(+) contacts are provided by residues 136–140 (GAGGA), 160–165 (NRTAAR), and isoleucine 225. Residue tyrosine 227 coordinates shikimate. Glycine 248 contacts NADP(+).

It belongs to the shikimate dehydrogenase family. As to quaternary structure, homodimer.

The enzyme catalyses shikimate + NADP(+) = 3-dehydroshikimate + NADPH + H(+). It participates in metabolic intermediate biosynthesis; chorismate biosynthesis; chorismate from D-erythrose 4-phosphate and phosphoenolpyruvate: step 4/7. Involved in the biosynthesis of the chorismate, which leads to the biosynthesis of aromatic amino acids. Catalyzes the reversible NADPH linked reduction of 3-dehydroshikimate (DHSA) to yield shikimate (SA). The protein is Shikimate dehydrogenase (NADP(+)) of Sinorhizobium fredii (strain NBRC 101917 / NGR234).